Here is a 212-residue protein sequence, read N- to C-terminus: 3-isopropylmalate dehydratase small subunit (212 aa).

It belongs to the LeuD family. LeuD type 1 subfamily. Heterodimer of LeuC and LeuD.

It carries out the reaction (2R,3S)-3-isopropylmalate = (2S)-2-isopropylmalate. The protein operates within amino-acid biosynthesis; L-leucine biosynthesis; L-leucine from 3-methyl-2-oxobutanoate: step 2/4. Its function is as follows. Catalyzes the isomerization between 2-isopropylmalate and 3-isopropylmalate, via the formation of 2-isopropylmaleate. This chain is 3-isopropylmalate dehydratase small subunit, found in Thiobacillus denitrificans (strain ATCC 25259 / T1).